The following is a 236-amino-acid chain: Pyridoxal 5'-phosphate synthase subunit PdxT (236 aa).

L-glutamine is bound at residue 61 to 63 (GES). Cys-93 (nucleophile) is an active-site residue. Residues Arg-127 and 163–164 (IR) contribute to the L-glutamine site. Active-site charge relay system residues include His-215 and Glu-217.

This sequence belongs to the glutaminase PdxT/SNO family. In terms of assembly, in the presence of PdxS, forms a dodecamer of heterodimers. Only shows activity in the heterodimer.

It carries out the reaction aldehydo-D-ribose 5-phosphate + D-glyceraldehyde 3-phosphate + L-glutamine = pyridoxal 5'-phosphate + L-glutamate + phosphate + 3 H2O + H(+). The enzyme catalyses L-glutamine + H2O = L-glutamate + NH4(+). It functions in the pathway cofactor biosynthesis; pyridoxal 5'-phosphate biosynthesis. Catalyzes the hydrolysis of glutamine to glutamate and ammonia as part of the biosynthesis of pyridoxal 5'-phosphate. The resulting ammonia molecule is channeled to the active site of PdxS. In Pseudarthrobacter chlorophenolicus (strain ATCC 700700 / DSM 12829 / CIP 107037 / JCM 12360 / KCTC 9906 / NCIMB 13794 / A6) (Arthrobacter chlorophenolicus), this protein is Pyridoxal 5'-phosphate synthase subunit PdxT.